We begin with the raw amino-acid sequence, 553 residues long: Putative transport protein PM1071 (553 aa).

The next 5 membrane-spanning stretches (helical) occupy residues 4–24, 28–48, 65–85, 91–111, and 157–177; these read IAITISLLALVAVIGLWIGHW, GVGLGIGGVLFGGIIVAHFTN, FGLILFVYTIGIQVGPGFFAS, LKLNGFAALIVLLGSLAVIVI, and MAYAMAYPFGICGILLSMWLI. RCK C-terminal domains lie at 190–276 and 277–361; these read KNFL…VLGE and EVDV…ILGN. The next 6 membrane-spanning stretches (helical) occupy residues 371-391, 403-425, 439-459, 464-484, 496-516, and 533-553; these read MLPVFIGIGLGVLLGSIPFHI, AGGPLVVALILARIGSIGKLYWF, IVLFLAVVGLKSGGNFVDTLV, LEWMVYGIFITFVPLMIVGIV, LCGLLAGSMTDPPALAFANAI, and LVMFLRIISPQLLAILLWTLL.

Belongs to the AAE transporter (TC 2.A.81) family. YidE subfamily.

The protein localises to the cell membrane. In Pasteurella multocida (strain Pm70), this protein is Putative transport protein PM1071.